The primary structure comprises 229 residues: Type-5 uracil-DNA glycosylase (229 aa).

Cys19, Cys22, Cys123, and Cys138 together coordinate [4Fe-4S] cluster.

Belongs to the uracil-DNA glycosylase (UDG) superfamily. Type 5 (UDGb) family.

Functionally, DNA glycosylase with broad substrate specificity. The chain is Type-5 uracil-DNA glycosylase from Mycobacterium leprae (strain TN).